We begin with the raw amino-acid sequence, 26 residues long: Delta-hemolysin (26 aa).

M1 is modified (N-formylmethionine).

It belongs to the delta-lysin family.

It is found in the secreted. Its subcellular location is the host cell membrane. Functionally, lyses erythrocytes and many other mammalian cells. The sequence is that of Delta-hemolysin (hld) from Staphylococcus aureus (strain MSSA476).